The following is a 131-amino-acid chain: Profilin-1 (131 aa).

This sequence belongs to the profilin family. As to quaternary structure, occurs in many kinds of cells as a complex with monomeric actin in a 1:1 ratio. In terms of tissue distribution, expressed at low levels roots, leaves, stems, flowers and siliques. Expressed in leaf epidermal cells, trichomes and stem epidermal cells. Detected in phloem exudates (at protein level).

It localises to the cytoplasm. Its subcellular location is the cytoskeleton. Binds to actin monomers and regulates the organization of the actin cytoskeleton. At high concentrations, profilin prevents the polymerization of actin, whereas it enhances it at low concentrations. At low concentrations, associates with the poly-proline motif of formins to enhance actin filament elongation rate. Binds ACT1, ACT7 and ACT11 and inhibits actin polymerization. Coordinates the stochastic dynamic properties of actin filaments by modulating formin-mediated actin nucleation and assembly during axial cell expansion. Binds G-actin and poly-L-proline in vitro. Inhibits cell growth of various pathogenic fungal strains. May play a role as antifungal proteins in the defense system against fungal pathogen attacks. This Arabidopsis thaliana (Mouse-ear cress) protein is Profilin-1.